The primary structure comprises 316 residues: MRIVFAGTPDFAAQHLQQLLDESHQVVGVYTQPDRPAGRGKKPQPSAVKKLALEHQLPVYQPESLKSEEDQAALADLKPDVMVVVAYGLLLPQAVLDIPTKGCLNVHGSLLPRWRGAAPIQRAIWAGDLESGVCIMQMEAGLDTGPVLHEERCAISPDETSASLYHKLESLGPEALTKVLKDLDGYQSQAKPQSDANATYAKKLTKQEGKIDWTQPAAFIERCVRAFNPWPMSWCQSEHLKAGQNTVKIHAAELIQGASNKGPGTIINSTHEGIDVVTGDGILRITQAQMPGKKAQPASTLVNGYSNVFSPGLELQ.

109–112 (SLLP) contributes to the (6S)-5,6,7,8-tetrahydrofolate binding site.

The protein belongs to the Fmt family.

It carries out the reaction L-methionyl-tRNA(fMet) + (6R)-10-formyltetrahydrofolate = N-formyl-L-methionyl-tRNA(fMet) + (6S)-5,6,7,8-tetrahydrofolate + H(+). Functionally, attaches a formyl group to the free amino group of methionyl-tRNA(fMet). The formyl group appears to play a dual role in the initiator identity of N-formylmethionyl-tRNA by promoting its recognition by IF2 and preventing the misappropriation of this tRNA by the elongation apparatus. This chain is Methionyl-tRNA formyltransferase, found in Idiomarina loihiensis (strain ATCC BAA-735 / DSM 15497 / L2-TR).